We begin with the raw amino-acid sequence, 293 residues long: 4-hydroxy-tetrahydrodipicolinate synthase (293 aa).

Threonine 45 is a pyruvate binding site. Tyrosine 133 (proton donor/acceptor) is an active-site residue. Catalysis depends on lysine 161, which acts as the Schiff-base intermediate with substrate. Isoleucine 204 provides a ligand contact to pyruvate.

The protein belongs to the DapA family. Homotetramer; dimer of dimers.

It localises to the cytoplasm. The catalysed reaction is L-aspartate 4-semialdehyde + pyruvate = (2S,4S)-4-hydroxy-2,3,4,5-tetrahydrodipicolinate + H2O + H(+). The protein operates within amino-acid biosynthesis; L-lysine biosynthesis via DAP pathway; (S)-tetrahydrodipicolinate from L-aspartate: step 3/4. Functionally, catalyzes the condensation of (S)-aspartate-beta-semialdehyde [(S)-ASA] and pyruvate to 4-hydroxy-tetrahydrodipicolinate (HTPA). This is 4-hydroxy-tetrahydrodipicolinate synthase from Edwardsiella ictaluri (strain 93-146).